The sequence spans 1578 residues: E3 ubiquitin-protein ligase HECW2 (1578 aa).

Phosphoserine is present on Ser-48. Residues 171–298 (MEGGASGSLH…LERQAGDQML (128 aa)) enclose the C2 domain. Disordered regions lie at residues 341-453 (HTVN…FPTD) and 496-802 (IDDG…PSVR). Over residues 386–406 (RTSSTLEIDTEDLISTSSRNS) the composition is skewed to polar residues. Positions 518 to 532 (ASIHETASLEERLEN) are enriched in basic and acidic residues. Over residues 559 to 576 (SADQGSTELCSSQEVDQP) the composition is skewed to polar residues. The segment covering 577 to 593 (TSGADAGASDTSGGSRR) has biased composition (low complexity). Composition is skewed to polar residues over residues 597–614 (ETESLDQGSEPSQVSSET), 643–664 (SSCNESVTTQLSSVETRCSSLE), and 688–708 (PTSSGPAEGSQESVCTPSSLP). Low complexity-rich tracts occupy residues 721-735 (AAEAAALSEQGELGE), 746-755 (AAAAAPAAAA), and 769-782 (AQGACEGATAQEEG). Residues 737–1074 (WQRRGSLEGA…PRPSSTFNTV (338 aa)) form an interaction with TP73 region. The 34-residue stretch at 813 to 846 (EALPPNWEARIDSHGRIFYVDHVNRTTTWQRPTA) folds into the WW 1 domain. The stretch at 853–880 (LQRSNSIQQMEQLNRRYQSIRRTMTNER) forms a coiled coil. A phosphoserine mark is found at Ser-858 and Ser-915. Residues 991 to 1024 (LELPRGWEMKHDHQGKAFFVDHNSRTTTFIDPRL) form the WW 2 domain. Disordered stretches follow at residues 1030 to 1075 (RPTS…NTVS) and 1167 to 1193 (CQSPRGSPVSSPQNSPGTQRANARAPA). The segment covering 1037–1046 (HRQHLTRQRS) has biased composition (basic residues). Residues 1167–1187 (CQSPRGSPVSSPQNSPGTQRA) show a composition bias toward polar residues. Ser-1181 is modified (phosphoserine). The HECT domain maps to 1243–1578 (SRKDLQRNKL…VEETSTFGLE (336 aa)). The active-site Glycyl thioester intermediate is the Cys-1546.

In terms of assembly, interacts with TP73. Interacts with FZR1.

The protein resides in the cytoplasm. It is found in the cytoskeleton. It localises to the spindle. The catalysed reaction is S-ubiquitinyl-[E2 ubiquitin-conjugating enzyme]-L-cysteine + [acceptor protein]-L-lysine = [E2 ubiquitin-conjugating enzyme]-L-cysteine + N(6)-ubiquitinyl-[acceptor protein]-L-lysine.. It functions in the pathway protein modification; protein ubiquitination. Functionally, E3 ubiquitin-protein ligase that mediates ubiquitination of TP73. Acts to stabilize TP73 and enhance activation of transcription by TP73. Involved in the regulation of mitotic metaphase/anaphase transition. The sequence is that of E3 ubiquitin-protein ligase HECW2 (Hecw2) from Mus musculus (Mouse).